We begin with the raw amino-acid sequence, 452 residues long: Cobyrinate a,c-diamide synthase (452 aa).

In terms of domain architecture, GATase cobBQ-type spans 248–441; sequence RVAYALDAAF…LHIHFYQNPA (194 aa). Cys-330 (nucleophile) is an active-site residue.

The protein belongs to the CobB/CbiA family. Requires Mg(2+) as cofactor.

The enzyme catalyses cob(II)yrinate + 2 L-glutamine + 2 ATP + 2 H2O = cob(II)yrinate a,c diamide + 2 L-glutamate + 2 ADP + 2 phosphate + 2 H(+). It participates in cofactor biosynthesis; adenosylcobalamin biosynthesis; cob(II)yrinate a,c-diamide from sirohydrochlorin (anaerobic route): step 10/10. Catalyzes the ATP-dependent amidation of the two carboxylate groups at positions a and c of cobyrinate, using either L-glutamine or ammonia as the nitrogen source. The polypeptide is Cobyrinate a,c-diamide synthase (Listeria innocua serovar 6a (strain ATCC BAA-680 / CLIP 11262)).